A 355-amino-acid chain; its full sequence is Adenine deaminase (355 aa).

Zn(2+) contacts are provided by His-24, His-26, and His-204. Residue Glu-207 is the Proton donor of the active site. Residue Asp-285 participates in Zn(2+) binding. Asp-286 provides a ligand contact to substrate.

The protein belongs to the metallo-dependent hydrolases superfamily. Adenosine and AMP deaminases family. Adenine deaminase type 2 subfamily. The cofactor is Zn(2+).

It carries out the reaction adenine + H2O + H(+) = hypoxanthine + NH4(+). In terms of biological role, catalyzes the hydrolytic deamination of adenine to hypoxanthine. Plays an important role in the purine salvage pathway and in nitrogen catabolism. The protein is Adenine deaminase of Geotalea uraniireducens (strain Rf4) (Geobacter uraniireducens).